A 512-amino-acid chain; its full sequence is 2,3-bisphosphoglycerate-independent phosphoglycerate mutase (512 aa).

Asp-11 and Ser-61 together coordinate Mn(2+). Residue Ser-61 is the Phosphoserine intermediate of the active site. Substrate is bound by residues His-122, 152–153 (RD), Arg-184, Arg-190, 259–262 (RADR), and Lys-332. 5 residues coordinate Mn(2+): Asp-399, His-403, Asp-440, His-441, and His-459.

The protein belongs to the BPG-independent phosphoglycerate mutase family. As to quaternary structure, monomer. Mn(2+) is required as a cofactor.

It carries out the reaction (2R)-2-phosphoglycerate = (2R)-3-phosphoglycerate. Its pathway is carbohydrate degradation; glycolysis; pyruvate from D-glyceraldehyde 3-phosphate: step 3/5. Its function is as follows. Catalyzes the interconversion of 2-phosphoglycerate and 3-phosphoglycerate. In Francisella philomiragia subsp. philomiragia (strain ATCC 25017 / CCUG 19701 / FSC 153 / O#319-036), this protein is 2,3-bisphosphoglycerate-independent phosphoglycerate mutase.